Consider the following 772-residue polypeptide: General transcription and DNA repair factor IIH helicase subunit XPD (772 aa).

In terms of domain architecture, Helicase ATP-binding spans 7-283 (DLPILFPYPR…QSDSKKLQDE (277 aa)). ATP is bound at residue 42-49 (MPSGTGKT). [4Fe-4S] cluster is bound by residues Cys115, Cys133, Cys154, and Cys189. The DEAH box signature appears at 233 to 236 (DEAH).

This sequence belongs to the helicase family. RAD3/XPD subfamily. In terms of assembly, component of the 7-subunit TFIIH core complex composed of XPB/ptr8, XPD/rad15, ssl1, tfb1, tfb2, tfb4 and tfb5, which is active in NER. The core complex associates with the 3-subunit CTD-kinase module TFIIK composed of mcs2/cyclin H, mcs6/cdk7 and pmh1/tfb3 to form the 10-subunit holoenzyme (holo-TFIIH) active in transcription. [4Fe-4S] cluster serves as cofactor.

The protein resides in the nucleus. The catalysed reaction is Couples ATP hydrolysis with the unwinding of duplex DNA at the replication fork by translocating in the 5'-3' direction. This creates two antiparallel DNA single strands (ssDNA). The leading ssDNA polymer is the template for DNA polymerase III holoenzyme which synthesizes a continuous strand.. The enzyme catalyses ATP + H2O = ADP + phosphate + H(+). ATP-dependent 5'-3' DNA helicase, component of the general transcription and DNA repair factor IIH (TFIIH) core complex, which is involved in general and transcription-coupled nucleotide excision repair (NER) of damaged DNA and, when complexed to TFIIK, in RNA transcription by RNA polymerase II. In NER, TFIIH acts by opening DNA around the lesion to allow the excision of the damaged oligonucleotide and its replacement by a new DNA fragment. The ATP-dependent helicase activity of XPD/rad15 is required for DNA opening. In transcription, TFIIH has an essential role in transcription initiation. When the pre-initiation complex (PIC) has been established, TFIIH is required for promoter opening and promoter escape. Phosphorylation of the C-terminal tail (CTD) of the largest subunit of RNA polymerase II by the kinase module TFIIK controls the initiation of transcription. XPD/rad15 acts by forming a bridge between TFIIK and the core-TFIIH complex. Involved in the maintenance of the fidelity of DNA replication. In Schizosaccharomyces pombe (strain 972 / ATCC 24843) (Fission yeast), this protein is General transcription and DNA repair factor IIH helicase subunit XPD.